A 365-amino-acid chain; its full sequence is Membrane-bound lytic murein transglycosylase C (365 aa).

An N-terminal signal peptide occupies residues 1-19 (MKKYTKYLPLLLIIPFLAA). Residue Cys20 is the site of N-palmitoyl cysteine attachment. Cys20 carries the S-diacylglycerol cysteine lipid modification.

The protein belongs to the transglycosylase Slt family.

The protein resides in the cell outer membrane. The enzyme catalyses Exolytic cleavage of the (1-&gt;4)-beta-glycosidic linkage between N-acetylmuramic acid (MurNAc) and N-acetylglucosamine (GlcNAc) residues in peptidoglycan, from either the reducing or the non-reducing ends of the peptidoglycan chains, with concomitant formation of a 1,6-anhydrobond in the MurNAc residue.. Its function is as follows. Murein-degrading enzyme. May play a role in recycling of muropeptides during cell elongation and/or cell division. The polypeptide is Membrane-bound lytic murein transglycosylase C (Actinobacillus pleuropneumoniae serotype 5b (strain L20)).